A 610-amino-acid polypeptide reads, in one-letter code: Aspercryptin biosynthesis cluster-specific transcription regulator atnN (610 aa).

A compositionally biased stretch (polar residues) spans 1-26; that stretch reads MAPKDSQVSASNEMTGNPPSSVQGRS. A disordered region spans residues 1-27; that stretch reads MAPKDSQVSASNEMTGNPPSSVQGRSR. Positions 30–57 form a DNA-binding region, zn(2)-C6 fungal-type; that stretch reads CITCRIRRVKCDEERPHCRRCQSTGRKC. 2 disordered regions span residues 61–81 and 427–493; these read TPLTGQQPKQQPPQQAAKAGS and AGST…LPRP. Low complexity-rich tracts occupy residues 66–79 and 437–474; these read QQPKQQPPQQAAKA and SRAGSPSGSRSRSMSTSSSASRDDSPTTTTTTTTTPTP.

It is found in the nucleus. Functionally, transcription factor that positively regulates the cluster that mediate the production of aspercryptins, linear lipopeptides built from six amino acids including 2 highly unusual and nonproteogenic amino acids, 2-amino-octanoic acid (2aoa) and 2-amino-dodecanol (2adol). The chain is Aspercryptin biosynthesis cluster-specific transcription regulator atnN from Emericella nidulans (strain FGSC A4 / ATCC 38163 / CBS 112.46 / NRRL 194 / M139) (Aspergillus nidulans).